The primary structure comprises 600 residues: Proline--tRNA ligase (600 aa).

The protein belongs to the class-II aminoacyl-tRNA synthetase family. ProS type 1 subfamily. Homodimer.

Its subcellular location is the cytoplasm. It catalyses the reaction tRNA(Pro) + L-proline + ATP = L-prolyl-tRNA(Pro) + AMP + diphosphate. In terms of biological role, catalyzes the attachment of proline to tRNA(Pro) in a two-step reaction: proline is first activated by ATP to form Pro-AMP and then transferred to the acceptor end of tRNA(Pro). As ProRS can inadvertently accommodate and process non-cognate amino acids such as alanine and cysteine, to avoid such errors it has two additional distinct editing activities against alanine. One activity is designated as 'pretransfer' editing and involves the tRNA(Pro)-independent hydrolysis of activated Ala-AMP. The other activity is designated 'posttransfer' editing and involves deacylation of mischarged Ala-tRNA(Pro). The misacylated Cys-tRNA(Pro) is not edited by ProRS. In Synechococcus sp. (strain RCC307), this protein is Proline--tRNA ligase.